The following is a 151-amino-acid chain: Endoribonuclease YbeY (151 aa).

3 residues coordinate Zn(2+): His108, His112, and Asp118.

The protein belongs to the endoribonuclease YbeY family. It depends on Zn(2+) as a cofactor.

The protein localises to the cytoplasm. Functionally, single strand-specific metallo-endoribonuclease involved in late-stage 70S ribosome quality control and in maturation of the 3' terminus of the 16S rRNA. In Porphyromonas gingivalis (strain ATCC BAA-308 / W83), this protein is Endoribonuclease YbeY.